Here is a 241-residue protein sequence, read N- to C-terminus: Orotidine 5'-phosphate decarboxylase (241 aa).

Residues Asp-15, Lys-37, 64–73, Thr-126, Arg-187, Gln-196, Gly-216, and Arg-217 each bind substrate; that span reads DLKYHDIPNT. Lys-66 (proton donor) is an active-site residue.

This sequence belongs to the OMP decarboxylase family. Type 1 subfamily. As to quaternary structure, homodimer.

It catalyses the reaction orotidine 5'-phosphate + H(+) = UMP + CO2. It functions in the pathway pyrimidine metabolism; UMP biosynthesis via de novo pathway; UMP from orotate: step 2/2. In terms of biological role, catalyzes the decarboxylation of orotidine 5'-monophosphate (OMP) to uridine 5'-monophosphate (UMP). This is Orotidine 5'-phosphate decarboxylase from Trichlorobacter lovleyi (strain ATCC BAA-1151 / DSM 17278 / SZ) (Geobacter lovleyi).